We begin with the raw amino-acid sequence, 861 residues long: Bifunctional uridylyltransferase/uridylyl-removing enzyme (861 aa).

Positions 1–321 (MKNDNRIIKN…VYHQKQKIIR (321 aa)) are uridylyltransferase. Residues 322 to 678 (LDDEFQLSNR…IMPHHSQGGT (357 aa)) form a uridylyl-removing region. The HD domain maps to 440-562 (VDQHTLFVIR…LPHARYLDYL (123 aa)). 2 ACT domains span residues 679-760 (EVFI…AVSR) and 788-861 (QLFL…KSKY).

The protein belongs to the GlnD family. The cofactor is Mg(2+).

The catalysed reaction is [protein-PII]-L-tyrosine + UTP = [protein-PII]-uridylyl-L-tyrosine + diphosphate. The enzyme catalyses [protein-PII]-uridylyl-L-tyrosine + H2O = [protein-PII]-L-tyrosine + UMP + H(+). Its activity is regulated as follows. Uridylyltransferase (UTase) activity is inhibited by glutamine, while glutamine activates uridylyl-removing (UR) activity. Its function is as follows. Modifies, by uridylylation and deuridylylation, the PII regulatory proteins (GlnB and homologs), in response to the nitrogen status of the cell that GlnD senses through the glutamine level. Under low glutamine levels, catalyzes the conversion of the PII proteins and UTP to PII-UMP and PPi, while under higher glutamine levels, GlnD hydrolyzes PII-UMP to PII and UMP (deuridylylation). Thus, controls uridylylation state and activity of the PII proteins, and plays an important role in the regulation of nitrogen assimilation and metabolism. The sequence is that of Bifunctional uridylyltransferase/uridylyl-removing enzyme from Legionella pneumophila (strain Corby).